We begin with the raw amino-acid sequence, 211 residues long: Pyridoxine/pyridoxamine 5'-phosphate oxidase (211 aa).

Residues 7-10 and K65 contribute to the substrate site; that span reads RTDY. FMN contacts are provided by residues 60-65, 75-76, R81, and K82; these read RILLIK and FT. Substrate is bound by residues Y122, R126, and S130. FMN contacts are provided by residues 139 to 140 and W183; that span reads QS. 189–191 is a substrate binding site; it reads RLH. FMN is bound at residue R193.

It belongs to the pyridoxamine 5'-phosphate oxidase family. In terms of assembly, homodimer. It depends on FMN as a cofactor.

The enzyme catalyses pyridoxamine 5'-phosphate + O2 + H2O = pyridoxal 5'-phosphate + H2O2 + NH4(+). It carries out the reaction pyridoxine 5'-phosphate + O2 = pyridoxal 5'-phosphate + H2O2. Its pathway is cofactor metabolism; pyridoxal 5'-phosphate salvage; pyridoxal 5'-phosphate from pyridoxamine 5'-phosphate: step 1/1. It participates in cofactor metabolism; pyridoxal 5'-phosphate salvage; pyridoxal 5'-phosphate from pyridoxine 5'-phosphate: step 1/1. Its function is as follows. Catalyzes the oxidation of either pyridoxine 5'-phosphate (PNP) or pyridoxamine 5'-phosphate (PMP) into pyridoxal 5'-phosphate (PLP). In Janthinobacterium sp. (strain Marseille) (Minibacterium massiliensis), this protein is Pyridoxine/pyridoxamine 5'-phosphate oxidase.